The following is a 344-amino-acid chain: Cytochrome c biogenesis protein CcsA (344 aa).

8 helical membrane-spanning segments follow: residues 21–41 (NVAFAVCLGAMLFYWGGAAFP), 45–65 (LLSELGLAGMIGANLTIAALL), 80–100 (LYESLFFLAWGITALHLLALH), 106–126 (WVGVTTAPLATGVVAFAALAL), 151–171 (VMLLAYAALLVGSLLAIAFLI), 252–272 (LIGLGFPLLTIGIIAGAVWAN), 287–307 (WALITWLVFAAYLHARITKGW), and 313–333 (ALLASLGFGVVWVCYLGVNFL).

The protein belongs to the CcmF/CycK/Ccl1/NrfE/CcsA family. In terms of assembly, may interact with ccs1.

The protein resides in the cellular thylakoid membrane. In terms of biological role, required during biogenesis of c-type cytochromes (cytochrome c6 and cytochrome f) at the step of heme attachment. The chain is Cytochrome c biogenesis protein CcsA from Synechococcus sp. (strain JA-3-3Ab) (Cyanobacteria bacterium Yellowstone A-Prime).